The following is a 219-amino-acid chain: 2,5-diamino-6-ribosylamino-4(3H)-pyrimidinone 5'-phosphate reductase (219 aa).

NADP(+) is bound by residues Thr52, Asp56, 87 to 90 (SRCR), Val134, and 156 to 159 (GGTL).

This sequence belongs to the HTP reductase family. As to quaternary structure, homodimer.

The catalysed reaction is 2,5-diamino-6-(1-D-ribitylamino)pyrimidin-4(3H)-one 5'-phosphate + NADP(+) = 2,5-diamino-6-(1-D-ribosylamino)pyrimidin-4(3H)-one 5'-phosphate + NADPH + H(+). It carries out the reaction 2,5-diamino-6-(1-D-ribitylamino)pyrimidin-4(3H)-one 5'-phosphate + NAD(+) = 2,5-diamino-6-(1-D-ribosylamino)pyrimidin-4(3H)-one 5'-phosphate + NADH + H(+). The protein operates within cofactor biosynthesis; riboflavin biosynthesis. In terms of biological role, catalyzes an early step in riboflavin biosynthesis, the NADPH-dependent reduction of the ribose side chain of 2,5-diamino-6-ribosylamino-4(3H)-pyrimidinone 5'-phosphate, yielding 2,5-diamino-6-ribitylamino-4(3H)-pyrimidinone 5'-phosphate. The sequence is that of 2,5-diamino-6-ribosylamino-4(3H)-pyrimidinone 5'-phosphate reductase from Archaeoglobus fulgidus (strain ATCC 49558 / DSM 4304 / JCM 9628 / NBRC 100126 / VC-16).